The chain runs to 597 residues: FERM domain-containing protein 3 (597 aa).

The FERM domain maps to 32-312 (MRCTIRLLDD…ENQAFYKYAK (281 aa)). The segment at 383 to 403 (LLPSPSEQEEELPLGEGVPLP) is disordered. A helical transmembrane segment spans residues 531-551 (LLVVGLGLLLFVFPLLLLLLE).

As to expression, ovary-specific.

Its subcellular location is the membrane. Putative tumor suppressor gene that may be implicated in the origin and progression of lung cancer. This chain is FERM domain-containing protein 3 (FRMD3), found in Homo sapiens (Human).